A 93-amino-acid chain; its full sequence is YcgL domain-containing protein KPK_1976 (93 aa).

The region spanning 1–85 is the YcgL domain; that stretch reads MFCVIYRSTK…PSENLLKKHL (85 aa).

This Klebsiella pneumoniae (strain 342) protein is YcgL domain-containing protein KPK_1976.